Here is a 159-residue protein sequence, read N- to C-terminus: uncharacterized protein (159 aa).

Residues 1 to 20 (MKKIIAMSLLMFSVVMSVNA) form the signal peptide.

This is an uncharacterized protein from Pasteurella multocida (strain Pm70).